The following is a 319-amino-acid chain: Cytochrome c biogenesis protein CcsA (319 aa).

The next 7 membrane-spanning stretches (helical) occupy residues 9–29 (ILTHISFSLVSIGITIFLITL), 44–64 (GVIGTFLCITGLLVTRWAYSG), 71–91 (LYESLLFLSWSFAIIHMFPYL), 143–163 (MVLGYAALLCGSLLSVALLVI), 225–245 (IISLGFIFLTIGILSGAVWAN), 259–273 (TWAFITWTMFAIYLH), and 286–306 (AIVAFLGFIIIWICYFGVNLL).

Belongs to the CcmF/CycK/Ccl1/NrfE/CcsA family. May interact with Ccs1.

The protein resides in the plastid. Its subcellular location is the chloroplast thylakoid membrane. Functionally, required during biogenesis of c-type cytochromes (cytochrome c6 and cytochrome f) at the step of heme attachment. This chain is Cytochrome c biogenesis protein CcsA, found in Oenothera parviflora (Small-flowered evening primrose).